A 238-amino-acid chain; its full sequence is Ribosomal RNA small subunit methyltransferase G (238 aa).

S-adenosyl-L-methionine-binding positions include Gly77, Phe82, 128–129 (AE), and Arg147. Residues 219-238 (KETPNKYPRKPGTPNKLPIE) form a disordered region.

Belongs to the methyltransferase superfamily. RNA methyltransferase RsmG family.

The protein localises to the cytoplasm. Functionally, specifically methylates the N7 position of guanine in position 535 of 16S rRNA. The sequence is that of Ribosomal RNA small subunit methyltransferase G from Listeria monocytogenes serovar 1/2a (strain ATCC BAA-679 / EGD-e).